A 273-amino-acid polypeptide reads, in one-letter code: SPbeta prophage-derived uncharacterized protein YomF (273 aa).

Positions 119 to 149 (VIETLQGLIDEAEDTIIRMNERIAECERVTK) form a coiled coil.

The protein is SPbeta prophage-derived uncharacterized protein YomF (yomF) of Bacillus subtilis (strain 168).